Reading from the N-terminus, the 275-residue chain is Phosphate import ATP-binding protein PstB 1 (275 aa).

In terms of domain architecture, ABC transporter spans 22–261 (LETQAVSVYY…NRTEKIFNSP (240 aa)). 54-61 (GPSGCGKS) is a binding site for ATP.

The protein belongs to the ABC transporter superfamily. Phosphate importer (TC 3.A.1.7) family. As to quaternary structure, the complex is composed of two ATP-binding proteins (PstB), two transmembrane proteins (PstC and PstA) and a solute-binding protein (PstS).

It localises to the cell inner membrane. It catalyses the reaction phosphate(out) + ATP + H2O = ADP + 2 phosphate(in) + H(+). Its function is as follows. Part of the ABC transporter complex PstSACB involved in phosphate import. Responsible for energy coupling to the transport system. This is Phosphate import ATP-binding protein PstB 1 from Synechococcus sp. (strain JA-2-3B'a(2-13)) (Cyanobacteria bacterium Yellowstone B-Prime).